The sequence spans 455 residues: Ribulose bisphosphate carboxylase large chain (455 aa).

Lys5 carries the N6,N6,N6-trimethyllysine modification. Substrate contacts are provided by Asn114 and Thr164. Lys166 acts as the Proton acceptor in catalysis. Lys168 is a substrate binding site. Residues Lys192, Asp194, and Glu195 each contribute to the Mg(2+) site. Lys192 is modified (N6-carboxylysine). The active-site Proton acceptor is the His285. Arg286, His318, and Ser370 together coordinate substrate.

It belongs to the RuBisCO large chain family. Type I subfamily. In terms of assembly, heterohexadecamer of 8 large chains and 8 small chains; disulfide-linked. The disulfide link is formed within the large subunit homodimers. Requires Mg(2+) as cofactor. In terms of processing, the disulfide bond which can form in the large chain dimeric partners within the hexadecamer appears to be associated with oxidative stress and protein turnover.

It localises to the plastid. The protein localises to the chloroplast. The catalysed reaction is 2 (2R)-3-phosphoglycerate + 2 H(+) = D-ribulose 1,5-bisphosphate + CO2 + H2O. It carries out the reaction D-ribulose 1,5-bisphosphate + O2 = 2-phosphoglycolate + (2R)-3-phosphoglycerate + 2 H(+). Its function is as follows. RuBisCO catalyzes two reactions: the carboxylation of D-ribulose 1,5-bisphosphate, the primary event in carbon dioxide fixation, as well as the oxidative fragmentation of the pentose substrate in the photorespiration process. Both reactions occur simultaneously and in competition at the same active site. The protein is Ribulose bisphosphate carboxylase large chain of Lupinus microcarpus (Chick lupine).